The following is a 307-amino-acid chain: tRNA pseudouridine synthase B (307 aa).

Aspartate 45 (nucleophile) is an active-site residue.

Belongs to the pseudouridine synthase TruB family. Type 1 subfamily.

It catalyses the reaction uridine(55) in tRNA = pseudouridine(55) in tRNA. Functionally, responsible for synthesis of pseudouridine from uracil-55 in the psi GC loop of transfer RNAs. The protein is tRNA pseudouridine synthase B of Heliobacterium mobile (Heliobacillus mobilis).